Here is a 175-residue protein sequence, read N- to C-terminus: NADH-ubiquinone oxidoreductase chain 6 (175 aa).

5 consecutive transmembrane segments (helical) span residues 1 to 21 (MMTY…VGFS), 25 to 45 (SPIY…GIVL), 47 to 67 (FGGS…MMVV), 88 to 108 (VVLG…YYVL), and 149 to 169 (YGTW…VVIM).

This sequence belongs to the complex I subunit 6 family. Core subunit of respiratory chain NADH dehydrogenase (Complex I) which is composed of 45 different subunits.

It is found in the mitochondrion inner membrane. The catalysed reaction is a ubiquinone + NADH + 5 H(+)(in) = a ubiquinol + NAD(+) + 4 H(+)(out). Functionally, core subunit of the mitochondrial membrane respiratory chain NADH dehydrogenase (Complex I) which catalyzes electron transfer from NADH through the respiratory chain, using ubiquinone as an electron acceptor. Essential for the catalytic activity and assembly of complex I. This chain is NADH-ubiquinone oxidoreductase chain 6 (MT-ND6), found in Ovis aries (Sheep).